We begin with the raw amino-acid sequence, 619 residues long: Probable ATP-dependent RNA helicase DDX59 (619 aa).

Positions 1–101 (MFVPRSLKIK…KSFSKTQRWP (101 aa)) are disordered. Positions 12 to 27 (SSNDDLKSGEAKKSKP) are enriched in basic and acidic residues. Lys-26 is covalently cross-linked (Glycyl lysine isopeptide (Lys-Gly) (interchain with G-Cter in SUMO2)). A compositionally biased stretch (polar residues) spans 59 to 76 (ASSTNSPSCQLAEVSSTG). Position 64 is a phosphoserine (Ser-64). The segment covering 79–91 (EGVKDSHPSEEPV) has biased composition (basic and acidic residues). Residues 104–133 (GEPVCVVCGRYGEYICDKTDEDVCSLECKA) form an HIT-type zinc finger. At Ser-160 the chain carries Phosphoserine. The short motif at 203-231 (IDFEHCGFPETLNQNLKKSGYEVPTPIQM) is the Q motif element. Residues 234–405 (IPVGLLGRDI…DQLLHNPVRI (172 aa)) form the Helicase ATP-binding domain. Residue 247 to 254 (ADTGSGKT) participates in ATP binding. The DEAD box signature appears at 353–356 (DEAD). Positions 416-579 (SVRQIILWVE…ILPPQLLNSP (164 aa)) constitute a Helicase C-terminal domain. Basic and acidic residues predominate over residues 583–594 (EQKRKEQQKDRQ). The tract at residues 583–603 (EQKRKEQQKDRQTQNSLVTGA) is disordered.

The protein belongs to the DEAD box helicase family. DDX59 subfamily. In terms of assembly, interacts (via HIT-type zinc finger) with the RUVBL1/RUVBL2 complex in the presence of ADP.

The protein resides in the cytoplasm. The protein localises to the nucleus. The catalysed reaction is ATP + H2O = ADP + phosphate + H(+). The chain is Probable ATP-dependent RNA helicase DDX59 (Ddx59) from Mus musculus (Mouse).